We begin with the raw amino-acid sequence, 138 residues long: Large ribosomal subunit protein uL16 (138 aa).

A compositionally biased stretch (basic residues) spans 1–15 (MLSPKKVKYRKKQRG). Residues 1–21 (MLSPKKVKYRKKQRGRLSGEA) form a disordered region.

This sequence belongs to the universal ribosomal protein uL16 family. In terms of assembly, part of the 50S ribosomal subunit.

In terms of biological role, binds 23S rRNA and is also seen to make contacts with the A and possibly P site tRNAs. This Borreliella afzelii (strain PKo) (Borrelia afzelii) protein is Large ribosomal subunit protein uL16.